A 75-amino-acid polypeptide reads, in one-letter code: Small ribosomal subunit protein bS18 (75 aa).

The protein belongs to the bacterial ribosomal protein bS18 family. Part of the 30S ribosomal subunit. Forms a tight heterodimer with protein bS6.

Its function is as follows. Binds as a heterodimer with protein bS6 to the central domain of the 16S rRNA, where it helps stabilize the platform of the 30S subunit. This is Small ribosomal subunit protein bS18 from Yersinia enterocolitica serotype O:8 / biotype 1B (strain NCTC 13174 / 8081).